The primary structure comprises 619 residues: Probable Xaa-Pro aminopeptidase P (619 aa).

Residues aspartate 415, aspartate 426, glutamate 524, and glutamate 538 each coordinate Mn(2+).

It belongs to the peptidase M24B family. Mn(2+) serves as cofactor.

It carries out the reaction Release of any N-terminal amino acid, including proline, that is linked to proline, even from a dipeptide or tripeptide.. Catalyzes the removal of a penultimate prolyl residue from the N-termini of peptides. This Fusarium vanettenii (strain ATCC MYA-4622 / CBS 123669 / FGSC 9596 / NRRL 45880 / 77-13-4) (Fusarium solani subsp. pisi) protein is Probable Xaa-Pro aminopeptidase P (AMPP).